A 243-amino-acid chain; its full sequence is ATP synthase subunit b, mitochondrial (243 aa).

It belongs to the eukaryotic ATPase B chain family. In terms of assembly, F-type ATPases have 2 components, CF(1) - the catalytic core - and CF(0) - the membrane proton channel. CF(1) has five subunits: alpha(3), beta(3), gamma(1), delta(1), epsilon(1). CF(0) has three main subunits: a, b and c.

The protein resides in the mitochondrion. It is found in the mitochondrion inner membrane. In terms of biological role, mitochondrial membrane ATP synthase (F(1)F(0) ATP synthase or Complex V) produces ATP from ADP in the presence of a proton gradient across the membrane which is generated by electron transport complexes of the respiratory chain. F-type ATPases consist of two structural domains, F(1) - containing the extramembraneous catalytic core, and F(0) - containing the membrane proton channel, linked together by a central stalk and a peripheral stalk. During catalysis, ATP synthesis in the catalytic domain of F(1) is coupled via a rotary mechanism of the central stalk subunits to proton translocation. Part of the complex F(0) domain and the peripheric stalk, which acts as a stator to hold the catalytic alpha(3)beta(3) subcomplex and subunit a/ATP6 static relative to the rotary elements. The polypeptide is ATP synthase subunit b, mitochondrial (Drosophila melanogaster (Fruit fly)).